The following is a 110-amino-acid chain: ATP-dependent Clp protease adapter protein ClpS 2 (110 aa).

The tract at residues 1–24 (MSNDENRSGSPTGPNTSVITKVKP) is disordered. Positions 8-19 (SGSPTGPNTSVI) are enriched in polar residues.

It belongs to the ClpS family. In terms of assembly, binds to the N-terminal domain of the chaperone ClpA.

In terms of biological role, involved in the modulation of the specificity of the ClpAP-mediated ATP-dependent protein degradation. This is ATP-dependent Clp protease adapter protein ClpS 2 from Bradyrhizobium diazoefficiens (strain JCM 10833 / BCRC 13528 / IAM 13628 / NBRC 14792 / USDA 110).